Consider the following 86-residue polypeptide: MAIFCNNVLAALPTQCNPGFLDDLPPRIRKVCVALSRIYELGSEMESYIGDKENHITGFHESIPLLDSGVKRQDVDHVFLRFGRRR.

The first 18 residues, 1 to 18 (MAIFCNNVLAALPTQCNP), serve as a signal peptide directing secretion. A propeptide spanning residues 19-70 (GFLDDLPPRIRKVCVALSRIYELGSEMESYIGDKENHITGFHESIPLLDSGV) is cleaved from the precursor. Position 73 is a pyrrolidone carboxylic acid (Gln-73). Position 82 is a phenylalanine amide (Phe-82).

The protein localises to the secreted. Myoinhibiting neuropeptide. The sequence is that of Myosuppressin from Apis mellifera (Honeybee).